The chain runs to 609 residues: Probable G-protein coupled receptor 153 (609 aa).

Topologically, residues 1–11 are extracellular; it reads MSDERRLPGSA. The chain crosses the membrane as a helical span at residues 12 to 32; sequence VGWLVCGGLSLLANAWGILSV. Residues 33–41 lie on the Cytoplasmic side of the membrane; it reads GAKQKKWKP. The chain crosses the membrane as a helical span at residues 42-62; it reads LEFLLCTLAATHMLNVAVPIA. At 63–84 the chain is on the extracellular side; that stretch reads TYSVVQLRRQRPDFEWNEGLCK. Residues 85–105 form a helical membrane-spanning segment; the sequence is VFVSTFYTLTLATCFSVTSLS. At 106–126 the chain is on the cytoplasmic side; the sequence is YHRMWMVCWPVNYRLSNAKKQ. The chain crosses the membrane as a helical span at residues 127–147; sequence AVHTVMGIWMVSFILSALPAV. At 148 to 175 the chain is on the extracellular side; that stretch reads GWHDTSERFYTHGCRFIVAEIGLGFGVC. Residues 176 to 196 form a helical membrane-spanning segment; sequence FLLLVGGSVAMGVICTAIALF. Residues 197-243 lie on the Cytoplasmic side of the membrane; that stretch reads QTLAVQVGRQADRRAFTVPTIVVEDAQGKRRSSIDGSEPAKTSLQTT. The chain crosses the membrane as a helical span at residues 244-264; the sequence is GLVTTIVFIYDCLMGFPVLVV. Over 265 to 276 the chain is Extracellular; sequence SFSSLRADASAP. Residues 277–297 form a helical membrane-spanning segment; that stretch reads WMALCVLWCSVAQALLLPVFL. Residues 298-609 lie on the Cytoplasmic side of the membrane; sequence WACDRYRADL…LHSDSLGSAS (312 aa). 2 disordered regions span residues 446-496 and 514-609; these read DAPP…SASA and ALRR…GSAS. 2 stretches are compositionally biased toward low complexity: residues 458 to 479 and 527 to 536; these read ESLL…RDSP and AAPDGADPGE. Over residues 571–583 the composition is skewed to gly residues; that stretch reads EPGGLRAAGGGGS. Residues 584 to 596 are compositionally biased toward low complexity; it reads TSSFLSSPSESSG.

This sequence belongs to the G-protein coupled receptor 1 family.

The protein localises to the cell membrane. Its function is as follows. Orphan receptor. This is Probable G-protein coupled receptor 153 (GPR153) from Homo sapiens (Human).